The sequence spans 331 residues: UDP-xylose and UDP-N-acetylglucosamine transporter (331 aa).

Transmembrane regions (helical) follow at residues 5-25 (FAVT…ELLV), 30-50 (GCGN…GFIF), 59-79 (PQIP…VSVI), 92-112 (LHMI…IIIL), 122-142 (LSIV…AKQV), 153-173 (GVYA…ALLM), 201-221 (CLPL…AVLF), 238-260 (VMWF…VFIL), 267-289 (LTVT…LYFQ), and 301-321 (AVVF…PAAF).

Belongs to the nucleotide-sugar transporter family. SLC35B subfamily.

The protein localises to the golgi apparatus membrane. Sugar transporter that specifically mediates the transport of UDP-xylose (UDP-Xyl) and UDP-N-acetylglucosamine (UDP-GlcNAc) from cytosol into Golgi. The chain is UDP-xylose and UDP-N-acetylglucosamine transporter (slc35b4) from Danio rerio (Zebrafish).